The primary structure comprises 476 residues: Rifampicin monooxygenase (476 aa).

T12, E31, K32, Q98, L122, and T156 together coordinate FAD. Rifampicin contacts are provided by R196 and R213. Residues D277, L290, and N291 each coordinate FAD.

This sequence belongs to the rifampicin monooxygenase family. FAD serves as cofactor.

The enzyme catalyses rifampicin + NADPH + O2 = rifampicin para-naphthoquinone carboxamide + NADP(+) + H2O + H(+). It catalyses the reaction rifampicin + NADH + O2 = rifampicin para-naphthoquinone carboxamide + NAD(+) + H2O + H(+). It carries out the reaction rifamycin SV + NADPH + O2 = rifamycin SV para-naphthoquinone carboxamide + NADP(+) + H2O. The catalysed reaction is rifamycin SV + NADH + O2 = rifamycin SV para-naphthoquinone carboxamide + NAD(+) + H2O. Functionally, monooxygenase that can modify rifampicin, thereby inactivating its antibiotic activity. Inactivates a broad range of rifamycin antibiotics. The polypeptide is Rifampicin monooxygenase (Streptomyces venezuelae (strain ATCC 10712 / CBS 650.69 / DSM 40230 / JCM 4526 / NBRC 13096 / PD 04745)).